Here is an 89-residue protein sequence, read N- to C-terminus: Small ribosomal subunit protein uS15 (89 aa).

It belongs to the universal ribosomal protein uS15 family. In terms of assembly, part of the 30S ribosomal subunit. Forms a bridge to the 50S subunit in the 70S ribosome, contacting the 23S rRNA.

One of the primary rRNA binding proteins, it binds directly to 16S rRNA where it helps nucleate assembly of the platform of the 30S subunit by binding and bridging several RNA helices of the 16S rRNA. Functionally, forms an intersubunit bridge (bridge B4) with the 23S rRNA of the 50S subunit in the ribosome. The chain is Small ribosomal subunit protein uS15 from Roseobacter denitrificans (strain ATCC 33942 / OCh 114) (Erythrobacter sp. (strain OCh 114)).